Reading from the N-terminus, the 386-residue chain is bHLH transcription factor RHL1 (386 aa).

The disordered stretch occupies residues 119-186 (FTGSLNGTQP…RRGQATDPHS (68 aa)). Residues 127 to 137 (QPQQHFQHPPQ) are compositionally biased toward low complexity. Positions 138–151 (GNSNQIQGQNFGAT) are enriched in polar residues. Residues 180 to 193 (QATDPHSIAERLRR) are basic motif; degenerate. Positions 180 to 229 (QATDPHSIAERLRRERIAERMKALQELVPNANKTDKASMLDEIIDYVKFL) constitute a bHLH domain. The tract at residues 194–229 (ERIAERMKALQELVPNANKTDKASMLDEIIDYVKFL) is helix-loop-helix motif.

As to expression, expressed in root epidermal cells.

It localises to the nucleus. Transcription factor that regulates the development of root hairs. This chain is bHLH transcription factor RHL1, found in Lotus japonicus (Lotus corniculatus var. japonicus).